Consider the following 307-residue polypeptide: O-acetylserine dependent cystathionine beta-synthase (307 aa).

Position 44 is an N6-(pyridoxal phosphate)lysine (K44). Pyridoxal 5'-phosphate contacts are provided by residues N74, 178 to 182, and S265; that span reads GSGGT.

Belongs to the cysteine synthase/cystathionine beta-synthase family. Pyridoxal 5'-phosphate serves as cofactor.

It carries out the reaction O-acetyl-L-serine + L-homocysteine = L,L-cystathionine + acetate + H(+). In terms of biological role, catalyzes the conversion of O-acetylserine and homocysteine to cystathionine. The sequence is that of O-acetylserine dependent cystathionine beta-synthase (mccA) from Bacillus subtilis (strain 168).